Consider the following 268-residue polypeptide: Phosphatidylglycerol--prolipoprotein diacylglyceryl transferase (268 aa).

7 consecutive transmembrane segments (helical) span residues 10 to 30, 56 to 76, 92 to 112, 120 to 140, 174 to 194, 202 to 222, and 236 to 256; these read VALAIGPLKIHWYGLMYLIGI, LVFWLSMGVIVGGRLGYVLFY, WKGGMSFHGGFIGVMLAALWF, FFELMDFVAPLVPIGLGAGRI, PSQLYQFALEGVALFVILWLF, MAVSGMFALFYGIFRFIVEFV, and WLTMGQILCVPMILAGLGLIW. Arg139 is an a 1,2-diacyl-sn-glycero-3-phospho-(1'-sn-glycerol) binding site.

The protein belongs to the Lgt family.

The protein resides in the cell inner membrane. It catalyses the reaction L-cysteinyl-[prolipoprotein] + a 1,2-diacyl-sn-glycero-3-phospho-(1'-sn-glycerol) = an S-1,2-diacyl-sn-glyceryl-L-cysteinyl-[prolipoprotein] + sn-glycerol 1-phosphate + H(+). It participates in protein modification; lipoprotein biosynthesis (diacylglyceryl transfer). Functionally, catalyzes the transfer of the diacylglyceryl group from phosphatidylglycerol to the sulfhydryl group of the N-terminal cysteine of a prolipoprotein, the first step in the formation of mature lipoproteins. This chain is Phosphatidylglycerol--prolipoprotein diacylglyceryl transferase, found in Pseudomonas putida (strain ATCC 700007 / DSM 6899 / JCM 31910 / BCRC 17059 / LMG 24140 / F1).